A 393-amino-acid polypeptide reads, in one-letter code: NAD(P)H-quinone oxidoreductase subunit H, chloroplastic (393 aa).

It belongs to the complex I 49 kDa subunit family. As to quaternary structure, NDH is composed of at least 16 different subunits, 5 of which are encoded in the nucleus.

It is found in the plastid. It localises to the chloroplast thylakoid membrane. The enzyme catalyses a plastoquinone + NADH + (n+1) H(+)(in) = a plastoquinol + NAD(+) + n H(+)(out). The catalysed reaction is a plastoquinone + NADPH + (n+1) H(+)(in) = a plastoquinol + NADP(+) + n H(+)(out). In terms of biological role, NDH shuttles electrons from NAD(P)H:plastoquinone, via FMN and iron-sulfur (Fe-S) centers, to quinones in the photosynthetic chain and possibly in a chloroplast respiratory chain. The immediate electron acceptor for the enzyme in this species is believed to be plastoquinone. Couples the redox reaction to proton translocation, and thus conserves the redox energy in a proton gradient. This is NAD(P)H-quinone oxidoreductase subunit H, chloroplastic from Platanus occidentalis (Sycamore).